The following is a 201-amino-acid chain: uncharacterized protein (201 aa).

Coiled coils occupy residues 3–43 and 76–120; these read YMDD…EVYK and TGQV…AKTK.

This is an uncharacterized protein from Archaeoglobus fulgidus (strain ATCC 49558 / DSM 4304 / JCM 9628 / NBRC 100126 / VC-16).